A 737-amino-acid polypeptide reads, in one-letter code: Relaxin receptor 2 (737 aa).

Topologically, residues 1–399 are extracellular; the sequence is MWLLLHVILL…SSSEDLLANG (399 aa). Residues 27-64 form the LDL-receptor class A domain; it reads LCPKGYFPCGNLTKCLPRAFHCDGVDDCGNGADEDNCG. Cystine bridges form between C28–C41, C35–C54, and C48–C63. N37 is a glycosylation site (N-linked (GlcNAc...) asparagine). N-linked (GlcNAc...) asparagine glycosylation is present at N121. LRR repeat units lie at residues 121–142, 145–166, 169–190, 193–214, 217–238, 241–262, 265–286, 289–310, 313–334, and 337–358; these read NVTL…VFSR, ELRK…AFLG, NLQI…IFKD, QLAW…SFMG, SLFF…LCAQ, QLNW…TFLT, SLTV…TFSS, NLGE…LFSD, LLQK…QFGS, and QLQS…MFQP. N-linked (GlcNAc...) asparagine glycosylation occurs at N257. N-linked (GlcNAc...) asparagine glycosylation is found at N318, N350, and N361. The chain crosses the membrane as a helical span at residues 400-420; sequence ILRVSVWVIAFITCVGNFLVI. Residues 421 to 438 are Cytoplasmic-facing; that stretch reads AVRSLIKAENTTHAMSIK. The helical transmembrane segment at 439–459 threads the bilayer; it reads ILCCADCLMGVYLFSVGVFDI. Topologically, residues 460-478 are extracellular; it reads KYRGQYQKYALLWMESVPC. A disulfide bond links C478 and C556. A helical transmembrane segment spans residues 479-501; that stretch reads RLLGFLATLSTEVSVLLLTFLTL. Over 502–520 the chain is Cytoplasmic; sequence EKFLVIVFPFSNLRLGKRQ. Residues 521-541 form a helical membrane-spanning segment; it reads TAVALASIWVVGFLIAAVPFT. At 542-575 the chain is on the extracellular side; sequence REDYFGNFYGKNGVCFPLHYDQAEDFGSRGYSLG. The helical transmembrane segment at 576 to 596 threads the bilayer; it reads IFLGVNLLAFLVIVISYVTMF. Residues 597–622 lie on the Cytoplasmic side of the membrane; it reads CSIHKTALQTAEVRSHIGKEVAVANR. Residues 623–643 traverse the membrane as a helical segment; the sequence is FFFIVFSDAICWIPVFVVKIL. Residues 644-653 are Extracellular-facing; that stretch reads SLLQVEIPGT. Residues 654-674 form a helical membrane-spanning segment; sequence ITSWIVVFFLPVNSALNPILY. The Cytoplasmic portion of the chain corresponds to 675 to 737; it reads TLTTSFFKDK…GDSIMKPVSP (63 aa).

This sequence belongs to the G-protein coupled receptor 1 family. Expressed in embryonic and adult gonads of males and females, as well in male gubernarculum. Expressed also in brain. Not detected in kidney, spleen and heart.

The protein resides in the cell membrane. Its function is as follows. Receptor for relaxin. The activity of this receptor is mediated by G proteins leading to stimulation of adenylate cyclase and an increase of cAMP. May also be a receptor for Leydig insulin-like peptide (INSL3). This chain is Relaxin receptor 2 (Rxfp2), found in Mus musculus (Mouse).